Reading from the N-terminus, the 605-residue chain is Insulin-like growth factor-binding protein complex acid labile subunit (605 aa).

Positions 1–27 (MALRKGGLALALLLLSWVALGPRSLEG) are cleaved as a signal peptide. Residues 32–74 (TPGEAEGPACPATCACSYDDEVNELSVFCSSRNLTRLPDGIPG) form the LRRNT domain. Cystine bridges form between C41–C47 and C45–C60. N-linked (GlcNAc...) asparagine glycans are attached at residues N64, N85, and N96. 19 LRR repeats span residues 75-96 (GTQA…AFRN), 99-120 (SLAF…ALLG), 123-144 (NLCH…TFAY), 147-168 (ALAL…LFEG), 171-192 (NLWD…AFRG), 195-216 (GLRE…LFSG), 219-240 (ELRE…VFAQ), 243-264 (RLQK…AFLG), 267-288 (ALRW…TFPG), 291-312 (GLRV…TFED), 315-336 (FLEE…SFEG), 339-360 (QLEV…AFLG), 363-384 (NVAV…VFRG), 387-408 (KLHS…TFAG), 411-432 (GLRR…SLWG), 435-456 (ELLE…LFQG), 459-480 (KLEY…ALGP), 483-504 (RAFW…LLAS), and 507-528 (RLRY…PPGL). N368 is a glycosylation site (N-linked (GlcNAc...) asparagine). N515 carries an N-linked (GlcNAc...) asparagine glycan. In terms of domain architecture, LRRCT spans 536-605 (NPWDCSCPLK…DLGEAHFAPC (70 aa)). 3 cysteine pairs are disulfide-bonded: C540-C583, C542-C605, and C566-C571. The N-linked (GlcNAc...) asparagine glycan is linked to N580.

In terms of assembly, forms a ternary complex with IGF1 and IGFBP3.

It is found in the secreted. Its subcellular location is the extracellular space. Its function is as follows. Involved in protein-protein interactions that result in protein complexes, receptor-ligand binding or cell adhesion. This is Insulin-like growth factor-binding protein complex acid labile subunit (IGFALS) from Papio hamadryas (Hamadryas baboon).